Here is a 160-residue protein sequence, read N- to C-terminus: Putative pre-16S rRNA nuclease (160 aa).

The protein belongs to the YqgF nuclease family.

The protein localises to the cytoplasm. Could be a nuclease involved in processing of the 5'-end of pre-16S rRNA. This chain is Putative pre-16S rRNA nuclease, found in Rhodopseudomonas palustris (strain BisB5).